Here is a 149-residue protein sequence, read N- to C-terminus: UPF0756 membrane protein MS1439 (149 aa).

4 helical membrane-spanning segments follow: residues 10–32 (IMLV…ISAL), 56–76 (VGII…KVQL), 82–102 (FLNW…WFAG), and 126–146 (VAFL…LAVI).

This sequence belongs to the UPF0756 family.

It is found in the cell membrane. The polypeptide is UPF0756 membrane protein MS1439 (Mannheimia succiniciproducens (strain KCTC 0769BP / MBEL55E)).